The following is a 259-amino-acid chain: Proteasome subunit alpha (259 aa).

Positions 233-243 (PAAPAAASESA) are enriched in low complexity. The interval 233-259 (PAAPAAASESAPEPKPDTETKPADPQD) is disordered. Positions 244–259 (PEPKPDTETKPADPQD) are enriched in basic and acidic residues.

It belongs to the peptidase T1A family. In terms of assembly, the 20S proteasome core is composed of 14 alpha and 14 beta subunits that assemble into four stacked heptameric rings, resulting in a barrel-shaped structure. The two inner rings, each composed of seven catalytic beta subunits, are sandwiched by two outer rings, each composed of seven alpha subunits. The catalytic chamber with the active sites is on the inside of the barrel. Has a gated structure, the ends of the cylinder being occluded by the N-termini of the alpha-subunits. Is capped by the proteasome-associated ATPase, ARC.

The protein localises to the cytoplasm. Its pathway is protein degradation; proteasomal Pup-dependent pathway. With respect to regulation, the formation of the proteasomal ATPase ARC-20S proteasome complex, likely via the docking of the C-termini of ARC into the intersubunit pockets in the alpha-rings, may trigger opening of the gate for substrate entry. Interconversion between the open-gate and close-gate conformations leads to a dynamic regulation of the 20S proteasome proteolysis activity. Functionally, component of the proteasome core, a large protease complex with broad specificity involved in protein degradation. This Rhodococcus opacus (strain B4) protein is Proteasome subunit alpha.